Consider the following 286-residue polypeptide: MKLLRAQTAGFCMGVDLALKKLAALIDAPAKDAPAKAIVTFGPIIHNPQVLEDYAAKGVGVVNDPAAIAPGTTVVIRAHGIPDPVRRAIADRGAEIVDATCPKVKKAQTLIQAQAKQGRTLLLFGEEDHPEVKGLLSYATAGAHVFGDMEELEKLDLPHGPTYFLAAQTTQDEQEFLRIRDYLRNRFGAGLTVLSTICNATMNRQQEAMDLAAAVDFLVVVGGRDSGNTRRLAQVARSAGTPSVHIETADELSPGMFTGYATIGLTAGASTPKKIIDRVQQVLESY.

Cys-12 lines the [4Fe-4S] cluster pocket. Positions 46 and 79 each coordinate (2E)-4-hydroxy-3-methylbut-2-enyl diphosphate. Dimethylallyl diphosphate contacts are provided by His-46 and His-79. Residues His-46 and His-79 each coordinate isopentenyl diphosphate. Residue Cys-101 coordinates [4Fe-4S] cluster. His-129 lines the (2E)-4-hydroxy-3-methylbut-2-enyl diphosphate pocket. His-129 contributes to the dimethylallyl diphosphate binding site. His-129 serves as a coordination point for isopentenyl diphosphate. Residue Glu-131 is the Proton donor of the active site. (2E)-4-hydroxy-3-methylbut-2-enyl diphosphate is bound at residue Thr-169. Residue Cys-198 participates in [4Fe-4S] cluster binding. Residues Ser-226, Asn-228, and Ser-270 each coordinate (2E)-4-hydroxy-3-methylbut-2-enyl diphosphate. Residues Ser-226, Asn-228, and Ser-270 each contribute to the dimethylallyl diphosphate site. Positions 226, 228, and 270 each coordinate isopentenyl diphosphate.

Belongs to the IspH family. Requires [4Fe-4S] cluster as cofactor.

It carries out the reaction isopentenyl diphosphate + 2 oxidized [2Fe-2S]-[ferredoxin] + H2O = (2E)-4-hydroxy-3-methylbut-2-enyl diphosphate + 2 reduced [2Fe-2S]-[ferredoxin] + 2 H(+). It catalyses the reaction dimethylallyl diphosphate + 2 oxidized [2Fe-2S]-[ferredoxin] + H2O = (2E)-4-hydroxy-3-methylbut-2-enyl diphosphate + 2 reduced [2Fe-2S]-[ferredoxin] + 2 H(+). The protein operates within isoprenoid biosynthesis; dimethylallyl diphosphate biosynthesis; dimethylallyl diphosphate from (2E)-4-hydroxy-3-methylbutenyl diphosphate: step 1/1. It functions in the pathway isoprenoid biosynthesis; isopentenyl diphosphate biosynthesis via DXP pathway; isopentenyl diphosphate from 1-deoxy-D-xylulose 5-phosphate: step 6/6. Catalyzes the conversion of 1-hydroxy-2-methyl-2-(E)-butenyl 4-diphosphate (HMBPP) into a mixture of isopentenyl diphosphate (IPP) and dimethylallyl diphosphate (DMAPP). Acts in the terminal step of the DOXP/MEP pathway for isoprenoid precursor biosynthesis. This is 4-hydroxy-3-methylbut-2-enyl diphosphate reductase from Solidesulfovibrio magneticus (strain ATCC 700980 / DSM 13731 / RS-1) (Desulfovibrio magneticus).